An 87-amino-acid polypeptide reads, in one-letter code: Large ribosomal subunit protein bL27 (87 aa).

Positions 1-20 (MARKRGGSGSKNGRDSNPKY) are disordered.

This sequence belongs to the bacterial ribosomal protein bL27 family.

This is Large ribosomal subunit protein bL27 (rpmA) from Treponema pallidum (strain Nichols).